Reading from the N-terminus, the 277-residue chain is Shikimate dehydrogenase (NADP(+)) (277 aa).

Residues 14–16 (SKS) and Thr-61 each bind shikimate. The active-site Proton acceptor is Lys-65. Asp-77 contacts NADP(+). 2 residues coordinate shikimate: Asn-86 and Asp-102. Residues 127 to 131 (GAGGA), 151 to 156 (NRTPDK), and Met-215 contribute to the NADP(+) site. Residue Tyr-217 participates in shikimate binding. Gly-239 provides a ligand contact to NADP(+).

This sequence belongs to the shikimate dehydrogenase family. Homodimer.

It carries out the reaction shikimate + NADP(+) = 3-dehydroshikimate + NADPH + H(+). It participates in metabolic intermediate biosynthesis; chorismate biosynthesis; chorismate from D-erythrose 4-phosphate and phosphoenolpyruvate: step 4/7. Involved in the biosynthesis of the chorismate, which leads to the biosynthesis of aromatic amino acids. Catalyzes the reversible NADPH linked reduction of 3-dehydroshikimate (DHSA) to yield shikimate (SA). This chain is Shikimate dehydrogenase (NADP(+)), found in Nitrosomonas eutropha (strain DSM 101675 / C91 / Nm57).